The primary structure comprises 286 residues: uncharacterized protein (286 aa).

A disordered region spans residues 152–182 (YPSTTTSVTPGKKGEKTTKVDGFSSPLNQDT). The helical transmembrane segment at 198 to 218 (VLIAVTLFVSGIAITVFVIFE) threads the bilayer. The segment at 239-278 (RRPRKEDQQPGTAESQSDTQPKKVGQEAPNSSSPKKAVEI) is disordered. The span at 247–257 (QPGTAESQSDT) shows a compositional bias: polar residues.

It localises to the membrane. This is an uncharacterized protein from Bos taurus (Bovine).